We begin with the raw amino-acid sequence, 143 residues long: Small ribosomal subunit protein uS12 (143 aa).

This sequence belongs to the universal ribosomal protein uS12 family. In terms of assembly, component of the 40S small ribosomal subunit.

It is found in the cytoplasm. The protein localises to the cytosol. Its subcellular location is the rough endoplasmic reticulum. The sequence is that of Small ribosomal subunit protein uS12 (rps23) from Gillichthys mirabilis (Long-jawed mudsucker).